We begin with the raw amino-acid sequence, 84 residues long: Large ribosomal subunit protein bL27 (84 aa).

The segment at 1-22 (MAHKKAGGSTRNGRDSESKRLG) is disordered.

This sequence belongs to the bacterial ribosomal protein bL27 family.

This is Large ribosomal subunit protein bL27 from Shewanella loihica (strain ATCC BAA-1088 / PV-4).